The sequence spans 250 residues: ATP synthase subunit a (250 aa).

6 helical membrane passes run 29-49 (ASLFMVASAVLSAGFLYFATS), 84-104 (FFPLVFSLFMFVLTANLLGMV), 114-134 (IIVTFALALLVILTVILYGFI), 143-163 (LFVPQGVPGILLPLVVIIEII), 185-205 (ITLKVFAGFVASLGTLGALGI), and 208-228 (AILPLIMTVALTGLEFLVAFL).

Belongs to the ATPase A chain family. In terms of assembly, F-type ATPases have 2 components, CF(1) - the catalytic core - and CF(0) - the membrane proton channel. CF(1) has five subunits: alpha(3), beta(3), gamma(1), delta(1), epsilon(1). CF(0) has three main subunits: a(1), b(2) and c(9-12). The alpha and beta chains form an alternating ring which encloses part of the gamma chain. CF(1) is attached to CF(0) by a central stalk formed by the gamma and epsilon chains, while a peripheral stalk is formed by the delta and b chains.

The protein localises to the cell inner membrane. In terms of biological role, key component of the proton channel; it plays a direct role in the translocation of protons across the membrane. The chain is ATP synthase subunit a from Rhizobium rhizogenes (strain K84 / ATCC BAA-868) (Agrobacterium radiobacter).